A 453-amino-acid polypeptide reads, in one-letter code: tRNA modification GTPase MnmE (453 aa).

(6S)-5-formyl-5,6,7,8-tetrahydrofolate contacts are provided by R22, E79, and K119. The region spanning 215–376 (GMKVVIAGRP…LRNHLKECMG (162 aa)) is the TrmE-type G domain. N225 provides a ligand contact to K(+). Residues 225 to 230 (NAGKSS), 244 to 250 (TDIAGTT), 269 to 272 (DTAG), and 334 to 337 (NKAD) each bind GTP. S229 is a Mg(2+) binding site. 3 residues coordinate K(+): T244, I246, and T249. Mg(2+) is bound at residue T250. Position 453 (K453) interacts with (6S)-5-formyl-5,6,7,8-tetrahydrofolate.

This sequence belongs to the TRAFAC class TrmE-Era-EngA-EngB-Septin-like GTPase superfamily. TrmE GTPase family. Homodimer. Heterotetramer of two MnmE and two MnmG subunits. It depends on K(+) as a cofactor.

The protein localises to the cytoplasm. Functionally, exhibits a very high intrinsic GTPase hydrolysis rate. Involved in the addition of a carboxymethylaminomethyl (cmnm) group at the wobble position (U34) of certain tRNAs, forming tRNA-cmnm(5)s(2)U34. The chain is tRNA modification GTPase MnmE from Vibrio vulnificus (strain CMCP6).